The chain runs to 676 residues: Probable ERAD-associated E3 ubiquitin-protein ligase ASI1 (676 aa).

At methionine 1–arginine 78 the chain is on the perinuclear space side. Asparagine 24, asparagine 34, asparagine 46, and asparagine 66 each carry an N-linked (GlcNAc...) asparagine glycan. The chain crosses the membrane as a helical span at residues methionine 79–leucine 99. Residues asparagine 100 to histidine 126 are Nuclear-facing. Residues leucine 127–methionine 147 traverse the membrane as a helical segment. Residues histidine 148–aspartate 156 are Perinuclear space-facing. Residues phenylalanine 157–serine 177 form a helical membrane-spanning segment. Topologically, residues serine 178–asparagine 181 are nuclear. The helical transmembrane segment at valine 182–isoleucine 202 threads the bilayer. Over serine 203–proline 277 the chain is Perinuclear space. Residues glycine 278–phenylalanine 298 traverse the membrane as a helical segment. The Nuclear portion of the chain corresponds to threonine 299–valine 676. The RING-type; atypical zinc-finger motif lies at cysteine 624 to aspartate 664.

Component of the Asi complex, which contains ASI1, ASI2 and ASI3. Interacts directly with ASI1.

Its subcellular location is the nucleus inner membrane. It carries out the reaction S-ubiquitinyl-[E2 ubiquitin-conjugating enzyme]-L-cysteine + [acceptor protein]-L-lysine = [E2 ubiquitin-conjugating enzyme]-L-cysteine + N(6)-ubiquitinyl-[acceptor protein]-L-lysine.. Functionally, part of the nuclear inner membrane (INM)-specific branch of the ER-associated degradation (ERAD) pathway, required for the elimination of misfolded proteins in the INM, a specialized ER subdomain. Required for ERG11 degradation. Negative regulator of SPS-sensor signaling. Together with ASI2 and ASI3, prevents the unprocessed precursor forms of STP1 and STP2 that escape cytoplasmic anchoring from inducing SPS-sensor-regulated genes in the absence of inducing signals. Controls amino acid permease (AAP) gene expression in response to amino acid availability, a process mediated by the transcription factors STP1 and STP1. The chain is Probable ERAD-associated E3 ubiquitin-protein ligase ASI1 (ASI3) from Saccharomyces cerevisiae (strain ATCC 204508 / S288c) (Baker's yeast).